Consider the following 138-residue polypeptide: Large ribosomal subunit protein uL16 (138 aa).

Belongs to the universal ribosomal protein uL16 family. In terms of assembly, part of the 50S ribosomal subunit.

In terms of biological role, binds 23S rRNA and is also seen to make contacts with the A and possibly P site tRNAs. The chain is Large ribosomal subunit protein uL16 from Chlamydia felis (strain Fe/C-56) (Chlamydophila felis).